Consider the following 101-residue polypeptide: Large ribosomal subunit protein eL30 (101 aa).

The protein belongs to the eukaryotic ribosomal protein eL30 family.

This chain is Large ribosomal subunit protein eL30, found in Pyrobaculum calidifontis (strain DSM 21063 / JCM 11548 / VA1).